Reading from the N-terminus, the 277-residue chain is Large ribosomal subunit protein uL2m (277 aa).

A disordered region spans residues 225-263 (AMNPVDHPHGGGEGKTSGGRPSVTPWSWPTKGQPTRSKR). Positions 248 to 259 (TPWSWPTKGQPT) are enriched in polar residues.

The protein belongs to the universal ribosomal protein uL2 family.

The protein localises to the mitochondrion. The polypeptide is Large ribosomal subunit protein uL2m (RPL2) (Reclinomonas americana).